The chain runs to 307 residues: Nodulation protein NoeC (307 aa).

8 helical membrane-spanning segments follow: residues alanine 46–asparagine 66, serine 91–isoleucine 111, leucine 117–glycine 137, valine 140–alanine 160, isoleucine 163–isoleucine 183, isoleucine 212–valine 232, alanine 238–isoleucine 258, and valine 279–methionine 299.

The protein resides in the cell membrane. The protein is Nodulation protein NoeC (noeC) of Azorhizobium caulinodans (strain ATCC 43989 / DSM 5975 / JCM 20966 / LMG 6465 / NBRC 14845 / NCIMB 13405 / ORS 571).